Here is a 238-residue protein sequence, read N- to C-terminus: Chromosome partition protein MukE (238 aa).

Residues 206-238 (EESSQSSFDLDENEKLSDISAEEQHELELEGDA) form a disordered region. A compositionally biased stretch (basic and acidic residues) spans 218–238 (NEKLSDISAEEQHELELEGDA).

It belongs to the MukE family. In terms of assembly, interacts, and probably forms a ternary complex, with MukF and MukB. The complex formation is stimulated by calcium or magnesium.

It is found in the cytoplasm. It localises to the nucleoid. Functionally, involved in chromosome condensation, segregation and cell cycle progression. May participate in facilitating chromosome segregation by condensation DNA from both sides of a centrally located replisome during cell division. Probably acts via its interaction with MukB and MukF. In Aliivibrio salmonicida (strain LFI1238) (Vibrio salmonicida (strain LFI1238)), this protein is Chromosome partition protein MukE.